Reading from the N-terminus, the 438-residue chain is GTPase Der (438 aa).

EngA-type G domains lie at 4–169 and 178–353; these read PVVA…PEKG and IDVA…DQNS. GTP contacts are provided by residues 10–17, 57–61, 120–123, 184–191, 231–235, and 296–299; these read GRPNVGKS, DTGGI, NKVD, GKPNVGKS, DTAGL, and NKWD. Positions 354-438 constitute a KH-like domain; sequence RRVKTGLLNE…PIRLKFKQKT (85 aa).

It belongs to the TRAFAC class TrmE-Era-EngA-EngB-Septin-like GTPase superfamily. EngA (Der) GTPase family. Associates with the 50S ribosomal subunit.

GTPase that plays an essential role in the late steps of ribosome biogenesis. This chain is GTPase Der, found in Halothermothrix orenii (strain H 168 / OCM 544 / DSM 9562).